The following is a 287-amino-acid chain: Protein TMEPAI (287 aa).

Residues 1 to 40 (MHRLMGVNSTAAAAAGQPNVSCTCNCKRSLFQSMEITELE) lie on the Lumenal side of the membrane. Residues 41–63 (FVQIIIIVVVMMVMVVVITCLLS) traverse the membrane as a helical segment. The Cytoplasmic segment spans residues 64 to 287 (HYKLSARSFI…EKDKQKGHPL (224 aa)). Residues 158–161 (PPPY) carry the PPxY motif 1 motif. The SMAD interaction motif (SIM) motif lies at 186 to 189 (PPNR). The PPxY motif 2 signature appears at 229–232 (PPTY). The segment at 239–258 (YPGSSFQHQQSSGPPSLLEG) is disordered. Residues 242-252 (SSFQHQQSSGP) show a composition bias toward polar residues.

The protein belongs to the PMEPA1 family. Interacts with NEDD4 (via PPxY motifs). Interacts with AR. Interacts with LDLRAD4. Interacts (via the SMAD interaction motif) with SMAD2 and SMAD3. As to expression, highest expression in prostate. Also expressed in ovary.

The protein localises to the early endosome membrane. It localises to the golgi apparatus membrane. Functionally, functions as a negative regulator of TGF-beta signaling and thereby probably plays a role in cell proliferation, differentiation, apoptosis, motility, extracellular matrix production and immunosuppression. In the canonical TGF-beta pathway, ZFYVE9/SARA recruits the intracellular signal transducer and transcriptional modulators SMAD2 and SMAD3 to the TGF-beta receptor. Phosphorylated by the receptor, SMAD2 and SMAD3 then form a heteromeric complex with SMAD4 that translocates to the nucleus to regulate transcription. Through interaction with SMAD2 and SMAD3, LDLRAD4 may compete with ZFYVE9 and SMAD4 and prevent propagation of the intracellular signal. Also involved in down-regulation of the androgen receptor (AR), enhancing ubiquitination and proteasome-mediated degradation of AR, probably by recruiting NEDD4. This is Protein TMEPAI (PMEPA1) from Homo sapiens (Human).